A 447-amino-acid polypeptide reads, in one-letter code: Gustatory receptor family protein 3 (447 aa).

At 1–69 (MTITASNTLE…HTHSSARNTM (69 aa)) the chain is on the extracellular side. Residues 70–90 (FKWPLTIYNYLTLAILTAATI) traverse the membrane as a helical segment. Topologically, residues 91–116 (RRISQIKQKSATNEEKDAAFHVLNPT) are cytoplasmic. A helical transmembrane segment spans residues 117-137 (FVLTLCHALLMFSGLAAGFLL). At 138 to 171 (LKLQKQREKMYHVLDQGLGRNRNEEHDSHHFKLN) the chain is on the extracellular side. The chain crosses the membrane as a helical span at residues 172-192 (KLFISISFSFAAALSFVQIAT). Over 193-211 (KMRYLDLPDTPDLINRKIY) the chain is Cytoplasmic. Residues 212–232 (FVILEGYVIFIASSCISLVAI) form a helical membrane-spanning segment. Residues 233–292 (LFFQLCRILQFSIGQLIEEMVPKEKEECPLPEQSLQQIHDVQIHYQEISNAKLYIEQNFS) lie on the Extracellular side of the membrane. A helical membrane pass occupies residues 293 to 313 (FSLFYTYGCCIPLTCLLGYIA). Over 314 to 328 (FRNGIQADMAETFSV) the chain is Cytoplasmic. A helical transmembrane segment spans residues 329 to 349 (AIWLTNTMLALMLFSIPAFMI). The Extracellular segment spans residues 350–405 (AEEGDKLLTASFKMYHETLCEERDLLVLSQMSFLSFQMHATKLTLTAGNFFMMNRK). A helical transmembrane segment spans residues 406 to 426 (IMISLFSAIFTYFLILVQFDA). Topologically, residues 427 to 447 (EKERAGECNNQSRVLIVQPPV) are cytoplasmic.

Belongs to the insect chemoreceptor superfamily. Gustatory receptor (GR) family. As to expression, expressed in I2 pharyngeal neurons.

The protein resides in the membrane. Chemoreceptor involved in light-induced avoidance behavior. Probably acts as a molecular sensor in I2 pharyngeal neurons, required for the inhibition of feeding in response to light and hydrogen peroxide. Involved in circadian rhythms, probably by acting as a light sensor. In contrast to lite-1, does not act as a photoreceptor. The sequence is that of Gustatory receptor family protein 3 from Caenorhabditis elegans.